Here is a 543-residue protein sequence, read N- to C-terminus: Chaperonin GroEL 2 (543 aa).

ATP-binding positions include 29–32 (TLGP), 86–90 (DGTTT), Gly413, 479–481 (NAA), and Asp495.

This sequence belongs to the chaperonin (HSP60) family. As to quaternary structure, forms a cylinder of 14 subunits composed of two heptameric rings stacked back-to-back. Interacts with the co-chaperonin GroES.

The protein resides in the cytoplasm. It catalyses the reaction ATP + H2O + a folded polypeptide = ADP + phosphate + an unfolded polypeptide.. Its function is as follows. Together with its co-chaperonin GroES, plays an essential role in assisting protein folding. The GroEL-GroES system forms a nano-cage that allows encapsulation of the non-native substrate proteins and provides a physical environment optimized to promote and accelerate protein folding. This is Chaperonin GroEL 2 from Prochlorococcus marinus (strain NATL1A).